A 477-amino-acid chain; its full sequence is Regulator of G-protein signaling 7 (477 aa).

The DEP domain maps to 37–112; it reads EKNGIPIRTV…DDGTFYRFQT (76 aa). Residues Ser-229 and Ser-241 each carry the phosphoserine modification. Positions 236-257 are disordered; it reads DIRSHSPTHTPTPETKPPTEDE. Thr-243 is modified (phosphothreonine). Residues 255–316 form the G protein gamma domain; the sequence is EDELHRQIKY…LSDDTTFWEL (62 aa). The 116-residue stretch at 333–448 folds into the RGS domain; it reads GMDEALKDPV…IRSSAYQELL (116 aa). Ser-434 carries the phosphoserine modification.

In terms of assembly, interacts with GNB5, forming the RGS7-GNB5 complex. Interacts with GPR158; promotes the GTPase activator activity of the RGS7-GNB5 complex in absence of glycine, in contrast GTPase activator activity of the RGS7-GNB5 complex is inhibited in presence of glycine. Interacts with GPR179. Interacts with PKD1; this prevents rapid proteasomal degradation. Interacts with RGS7BP, leading to regulate the subcellular location of the heterodimer formed with GNB5. Interacts (phosphorylated form) with 14-3-3 protein YWHAQ. Interacts with SNAPIN. Interacts with GNAI1. Interacts with GNAO1, GNAI3 and GNAZ. Post-translationally, palmitoylated. In terms of processing, ubiquitinated, leading to rapid proteasomal degradation. Phosphorylation and subsequent interaction with 14-3-3 proteins inhibits GAP activity. In terms of tissue distribution, brain-specific. Predominantly cerebellar granule cells.

Its subcellular location is the cytoplasm. The protein localises to the cytosol. The protein resides in the cell membrane. It localises to the membrane. Functionally, GTPase activator component of the RGS7-GNB5 complex that regulates G protein-coupled receptor signaling cascades. The RGS7-GNB5 complex acts as an inhibitor signal transduction by promoting the GTPase activity of G protein alpha subunits, such as GNAO1, thereby driving them into their inactive GDP-bound form. May play a role in synaptic vesicle exocytosis. Glycine-dependent regulation of the RGS7-GNB5 complex by GPR158 affects mood and cognition via its ability to regulate neuronal excitability in L2/L3 pyramidal neurons of the prefrontal cortex. Modulates the activity of potassium channels that are activated by GNAO1 in response to muscarinic acetylcholine receptor M2/CHRM2 signaling. This Rattus norvegicus (Rat) protein is Regulator of G-protein signaling 7 (Rgs7).